Reading from the N-terminus, the 101-residue chain is uncharacterized protein (101 aa).

A compositionally biased stretch (low complexity) spans 65-79 (QEAAAPAGPQEPAEA). The disordered stretch occupies residues 65–101 (QEAAAPAGPQEPAEASGDAGKKEEVEEEEIEIDFGMF). The segment covering 89–101 (VEEEEIEIDFGMF) has biased composition (acidic residues).

This is an uncharacterized protein from Encephalitozoon cuniculi (strain GB-M1) (Microsporidian parasite).